We begin with the raw amino-acid sequence, 23 residues long: Coenzyme PQQ synthesis protein A (23 aa).

The segment at residues 15–19 is a cross-link (pyrroloquinoline quinone (Glu-Tyr)); the sequence is EVTLY.

Belongs to the PqqA family.

The protein operates within cofactor biosynthesis; pyrroloquinoline quinone biosynthesis. Its function is as follows. Required for coenzyme pyrroloquinoline quinone (PQQ) biosynthesis. PQQ is probably formed by cross-linking a specific glutamate to a specific tyrosine residue and excising these residues from the peptide. This Pseudomonas aeruginosa (strain UCBPP-PA14) protein is Coenzyme PQQ synthesis protein A.